A 475-amino-acid polypeptide reads, in one-letter code: Ribulose bisphosphate carboxylase large chain (475 aa).

Positions 1–2 are excised as a propeptide; it reads MS. Proline 3 carries the post-translational modification N-acetylproline. Lysine 14 carries the N6,N6,N6-trimethyllysine modification. Substrate contacts are provided by asparagine 123 and threonine 173. Lysine 175 acts as the Proton acceptor in catalysis. Lysine 177 is a binding site for substrate. Residues lysine 201, aspartate 203, and glutamate 204 each contribute to the Mg(2+) site. Lysine 201 bears the N6-carboxylysine mark. The Proton acceptor role is filled by histidine 294. Residues arginine 295, histidine 327, and serine 379 each contribute to the substrate site.

It belongs to the RuBisCO large chain family. Type I subfamily. Heterohexadecamer of 8 large chains and 8 small chains; disulfide-linked. The disulfide link is formed within the large subunit homodimers. Requires Mg(2+) as cofactor. The disulfide bond which can form in the large chain dimeric partners within the hexadecamer appears to be associated with oxidative stress and protein turnover.

Its subcellular location is the plastid. The protein localises to the chloroplast. It carries out the reaction 2 (2R)-3-phosphoglycerate + 2 H(+) = D-ribulose 1,5-bisphosphate + CO2 + H2O. The catalysed reaction is D-ribulose 1,5-bisphosphate + O2 = 2-phosphoglycolate + (2R)-3-phosphoglycerate + 2 H(+). Its function is as follows. RuBisCO catalyzes two reactions: the carboxylation of D-ribulose 1,5-bisphosphate, the primary event in carbon dioxide fixation, as well as the oxidative fragmentation of the pentose substrate in the photorespiration process. Both reactions occur simultaneously and in competition at the same active site. This Equisetum arvense (Field horsetail) protein is Ribulose bisphosphate carboxylase large chain.